Consider the following 128-residue polypeptide: MAKRVQTKKKVRKNIASGVVHIQSTFNNTIVTVTDVAGNVISWSSAGGRGFKGSRKSTPFAAQMASEDAVKKAMAQGLQTVEVYVKGPGPGRESALRALQAAGLTVTMIRDVTPIPHNGCRPPKRRRV.

This sequence belongs to the universal ribosomal protein uS11 family. Part of the 30S ribosomal subunit. Interacts with proteins S7 and S18. Binds to IF-3.

Functionally, located on the platform of the 30S subunit, it bridges several disparate RNA helices of the 16S rRNA. Forms part of the Shine-Dalgarno cleft in the 70S ribosome. This is Small ribosomal subunit protein uS11 from Desulfosudis oleivorans (strain DSM 6200 / JCM 39069 / Hxd3) (Desulfococcus oleovorans).